The chain runs to 385 residues: tRNA-specific 2-thiouridylase MnmA (385 aa).

Residues 29–36 and Leu55 each bind ATP; that span reads GLSGGVDS. The active-site Nucleophile is Cys116. An intrachain disulfide couples Cys116 to Cys225. Gly141 serves as a coordination point for ATP. Positions 175 to 177 are interaction with tRNA; sequence KDQ. Residue Cys225 is the Cysteine persulfide intermediate of the active site. The interaction with tRNA stretch occupies residues 330 to 331; sequence RY.

This sequence belongs to the MnmA/TRMU family.

The protein resides in the cytoplasm. It carries out the reaction S-sulfanyl-L-cysteinyl-[protein] + uridine(34) in tRNA + AH2 + ATP = 2-thiouridine(34) in tRNA + L-cysteinyl-[protein] + A + AMP + diphosphate + H(+). Functionally, catalyzes the 2-thiolation of uridine at the wobble position (U34) of tRNA, leading to the formation of s(2)U34. The sequence is that of tRNA-specific 2-thiouridylase MnmA from Prochlorococcus marinus (strain AS9601).